We begin with the raw amino-acid sequence, 308 residues long: MSALEETQSLCKQVDDICNNGMESVEQCNKLLDQLSKIPMSIEIIQKTNIGIKVNMMRKKVTDDAVAKRAKNIIKDWKNVVDGKSKSQDDGGAPPAKKHRKESVEEAKPEKKKIEAPYKRPEPSSRPEIVAQFASASFPPKHLENDETRLKSAQLLLSALRFGDMPQGTLDPEELAVQIEEKLYSVHRDTNKSYSAAVRSRIFNLRDKKNLALRENVLTGVVRAEKFATMTSEEMASAEIREMRDKFTKEAILEHQMSVQQGTPSDMFKCGKCGKKNCTYTQLQTRSSDEPMTTFVFCLECGNRWKFC.

A TFIIS N-terminal domain is found at 5-84 (EETQSLCKQV…KDWKNVVDGK (80 aa)). The segment at 82–126 (DGKSKSQDDGGAPPAKKHRKESVEEAKPEKKKIEAPYKRPEPSSR) is disordered. Basic and acidic residues predominate over residues 102-125 (ESVEEAKPEKKKIEAPYKRPEPSS). A TFIIS central domain is found at 148–263 (TRLKSAQLLL…EHQMSVQQGT (116 aa)). The TFIIS-type zinc finger occupies 266-306 (DMFKCGKCGKKNCTYTQLQTRSSDEPMTTFVFCLECGNRWK). The Zn(2+) site is built by C270, C273, C298, and C301.

Belongs to the TFS-II family.

Its subcellular location is the nucleus. Its function is as follows. Necessary for efficient RNA polymerase II transcription elongation past template-encoded arresting sites. The arresting sites in DNA have the property of trapping a certain fraction of elongating RNA polymerases that pass through, resulting in locked ternary complexes. Cleavage of the nascent transcript by S-II allows the resumption of elongation from the new 3'-terminus. This is Putative transcription elongation factor S-II from Caenorhabditis elegans.